Reading from the N-terminus, the 303-residue chain is tRNA pseudouridine synthase B (303 aa).

Asp46 serves as the catalytic Nucleophile.

This sequence belongs to the pseudouridine synthase TruB family. Type 1 subfamily.

The enzyme catalyses uridine(55) in tRNA = pseudouridine(55) in tRNA. Its function is as follows. Responsible for synthesis of pseudouridine from uracil-55 in the psi GC loop of transfer RNAs. This is tRNA pseudouridine synthase B from Hydrogenovibrio crunogenus (strain DSM 25203 / XCL-2) (Thiomicrospira crunogena).